The sequence spans 276 residues: Rhomboid protease GlpG (276 aa).

Helical transmembrane passes span 96–116 (VTWLIMIACILVFVVMSIVGA), 142–162 (AFMHFSLMHILFNLLWWWYIG), 169–189 (LGSGKLIVITVISALLSGYVQ), 192–212 (FSGPWFGGLSGVVYALMGYAW), 229–249 (LIAFALIWIVAGWFDVFGMSM), and 250–270 (ANGAHIAGLAVGLAMAFADTV). Ser-201 (nucleophile) is an active-site residue. Residue His-254 is part of the active site.

This sequence belongs to the peptidase S54 family.

The protein localises to the cell inner membrane. The enzyme catalyses Cleaves type-1 transmembrane domains using a catalytic dyad composed of serine and histidine that are contributed by different transmembrane domains.. Functionally, rhomboid-type serine protease that catalyzes intramembrane proteolysis. The protein is Rhomboid protease GlpG of Citrobacter koseri (strain ATCC BAA-895 / CDC 4225-83 / SGSC4696).